Consider the following 468-residue polypeptide: ATP synthase subunit beta (468 aa).

ATP is bound at residue Gly-155–Thr-162.

The protein belongs to the ATPase alpha/beta chains family. As to quaternary structure, F-type ATPases have 2 components, CF(1) - the catalytic core - and CF(0) - the membrane proton channel. CF(1) has five subunits: alpha(3), beta(3), gamma(1), delta(1), epsilon(1). CF(0) has three main subunits: a(1), b(2) and c(9-12). The alpha and beta chains form an alternating ring which encloses part of the gamma chain. CF(1) is attached to CF(0) by a central stalk formed by the gamma and epsilon chains, while a peripheral stalk is formed by the delta and b chains.

The protein resides in the cell membrane. It carries out the reaction ATP + H2O + 4 H(+)(in) = ADP + phosphate + 5 H(+)(out). Its function is as follows. Produces ATP from ADP in the presence of a proton gradient across the membrane. The catalytic sites are hosted primarily by the beta subunits. This is ATP synthase subunit beta from Bacillus cereus (strain G9842).